A 121-amino-acid chain; its full sequence is ATP synthase epsilon chain (121 aa).

Belongs to the ATPase epsilon chain family. F-type ATPases have 2 components, CF(1) - the catalytic core - and CF(0) - the membrane proton channel. CF(1) has five subunits: alpha(3), beta(3), gamma(1), delta(1), epsilon(1). CF(0) has three main subunits: a, b and c.

The protein resides in the cell membrane. In terms of biological role, produces ATP from ADP in the presence of a proton gradient across the membrane. This Mycolicibacterium smegmatis (strain ATCC 700084 / mc(2)155) (Mycobacterium smegmatis) protein is ATP synthase epsilon chain.